A 492-amino-acid chain; its full sequence is Ribulose bisphosphate carboxylase large chain (492 aa).

Substrate is bound by residues Asn-131 and Thr-181. The active-site Proton acceptor is the Lys-183. Lys-185 is a substrate binding site. Lys-209, Asp-211, and Glu-212 together coordinate Mg(2+). Position 209 is an N6-carboxylysine (Lys-209). His-301 (proton acceptor) is an active-site residue. Substrate is bound by residues Arg-302, His-334, and Ser-386.

Belongs to the RuBisCO large chain family. Type I subfamily. Heterohexadecamer of 8 large chains and 8 small chains. Requires Mg(2+) as cofactor.

The enzyme catalyses 2 (2R)-3-phosphoglycerate + 2 H(+) = D-ribulose 1,5-bisphosphate + CO2 + H2O. It carries out the reaction D-ribulose 1,5-bisphosphate + O2 = 2-phosphoglycolate + (2R)-3-phosphoglycerate + 2 H(+). Its function is as follows. RuBisCO catalyzes two reactions: the carboxylation of D-ribulose 1,5-bisphosphate, the primary event in carbon dioxide fixation, as well as the oxidative fragmentation of the pentose substrate. Both reactions occur simultaneously and in competition at the same active site. The polypeptide is Ribulose bisphosphate carboxylase large chain (Nitrosococcus oceani (strain ATCC 19707 / BCRC 17464 / JCM 30415 / NCIMB 11848 / C-107)).